A 502-amino-acid polypeptide reads, in one-letter code: ATP synthase subunit alpha (502 aa).

The interval 119–139 (GPIATTKSRPIESPAPGVMDR) is disordered. An ATP-binding site is contributed by 169–176 (GDRQTGKT).

It belongs to the ATPase alpha/beta chains family. F-type ATPases have 2 components, CF(1) - the catalytic core - and CF(0) - the membrane proton channel. CF(1) has five subunits: alpha(3), beta(3), gamma(1), delta(1), epsilon(1). CF(0) has three main subunits: a(1), b(2) and c(9-12). The alpha and beta chains form an alternating ring which encloses part of the gamma chain. CF(1) is attached to CF(0) by a central stalk formed by the gamma and epsilon chains, while a peripheral stalk is formed by the delta and b chains.

The protein resides in the cell membrane. The catalysed reaction is ATP + H2O + 4 H(+)(in) = ADP + phosphate + 5 H(+)(out). In terms of biological role, produces ATP from ADP in the presence of a proton gradient across the membrane. The alpha chain is a regulatory subunit. The chain is ATP synthase subunit alpha from Alkalihalophilus pseudofirmus (strain ATCC BAA-2126 / JCM 17055 / OF4) (Bacillus pseudofirmus).